The primary structure comprises 287 residues: Glutamate racemase (287 aa).

The segment covering 1–15 has biased composition (polar residues); sequence MATKPQDANTTSREA. The tract at residues 1-25 is disordered; sequence MATKPQDANTTSREAITSKADSPPR. Substrate contacts are provided by residues 32-33 and 64-65; these read DS and YG. The Proton donor/acceptor role is filled by C96. 97–98 contributes to the substrate binding site; sequence NT. C208 acts as the Proton donor/acceptor in catalysis. Residue 209 to 210 coordinates substrate; that stretch reads TH.

It belongs to the aspartate/glutamate racemases family.

It carries out the reaction L-glutamate = D-glutamate. It participates in cell wall biogenesis; peptidoglycan biosynthesis. In terms of biological role, provides the (R)-glutamate required for cell wall biosynthesis. This chain is Glutamate racemase, found in Yersinia pseudotuberculosis serotype IB (strain PB1/+).